Here is a 274-residue protein sequence, read N- to C-terminus: Dermonecrotic toxin SdSicTox-betaIIB2i (274 aa).

H5 is a catalytic residue. Mg(2+) is bound by residues E25 and D27. The Nucleophile role is filled by H41. 2 disulfides stabilise this stretch: C45-C51 and C47-C190. D85 provides a ligand contact to Mg(2+).

It belongs to the arthropod phospholipase D family. Class II subfamily. The cofactor is Mg(2+). In terms of tissue distribution, expressed by the venom gland.

It is found in the secreted. The catalysed reaction is an N-(acyl)-sphingosylphosphocholine = an N-(acyl)-sphingosyl-1,3-cyclic phosphate + choline. The enzyme catalyses an N-(acyl)-sphingosylphosphoethanolamine = an N-(acyl)-sphingosyl-1,3-cyclic phosphate + ethanolamine. It carries out the reaction a 1-acyl-sn-glycero-3-phosphocholine = a 1-acyl-sn-glycero-2,3-cyclic phosphate + choline. It catalyses the reaction a 1-acyl-sn-glycero-3-phosphoethanolamine = a 1-acyl-sn-glycero-2,3-cyclic phosphate + ethanolamine. Dermonecrotic toxins cleave the phosphodiester linkage between the phosphate and headgroup of certain phospholipids (sphingolipid and lysolipid substrates), forming an alcohol (often choline) and a cyclic phosphate. This toxin acts on sphingomyelin (SM). It may also act on ceramide phosphoethanolamine (CPE), lysophosphatidylcholine (LPC) and lysophosphatidylethanolamine (LPE), but not on lysophosphatidylserine (LPS), and lysophosphatidylglycerol (LPG). It acts by transphosphatidylation, releasing exclusively cyclic phosphate products as second products. Induces dermonecrosis, hemolysis, increased vascular permeability, edema, inflammatory response, and platelet aggregation. This chain is Dermonecrotic toxin SdSicTox-betaIIB2i, found in Sicarius cf. damarensis (strain GJB-2008) (Six-eyed sand spider).